The primary structure comprises 317 residues: HTH-type transcriptional regulator CfxR (317 aa).

The 58-residue stretch at 8-65 (LTLRQLQIFVTVARHASFVRAAEELHLTQPAVSMQVKQLESVVGMALFERVKGQLTLT) folds into the HTH lysR-type domain. A DNA-binding region (H-T-H motif) is located at residues 25-44 (FVRAAEELHLTQPAVSMQVK).

The protein belongs to the LysR transcriptional regulatory family.

In terms of biological role, trans-acting transcriptional regulator of RuBisCO genes (cfxLS) expression. The chain is HTH-type transcriptional regulator CfxR (cfxR) from Cupriavidus necator (strain ATCC 17699 / DSM 428 / KCTC 22496 / NCIMB 10442 / H16 / Stanier 337) (Ralstonia eutropha).